Reading from the N-terminus, the 248-residue chain is NADP-dependent 3-hydroxy acid dehydrogenase YdfG (248 aa).

NADP(+) is bound by residues 7–12 (GATAGF), 32–33 (RR), 54–55 (DV), and asparagine 81. Serine 134 contributes to the substrate binding site. NADP(+)-binding positions include tyrosine 147, lysine 151, and 177–185 (PGLVGGTEF). Catalysis depends on tyrosine 147, which acts as the Proton acceptor.

This sequence belongs to the short-chain dehydrogenases/reductases (SDR) family. Homotetramer.

It catalyses the reaction 3-hydroxypropanoate + NADP(+) = 3-oxopropanoate + NADPH + H(+). The enzyme catalyses L-allo-threonine + NADP(+) = aminoacetone + CO2 + NADPH. Functionally, NADP-dependent dehydrogenase with broad substrate specificity acting on 3-hydroxy acids. Catalyzes the NADP-dependent oxidation of L-allo-threonine to L-2-amino-3-keto-butyrate, which is spontaneously decarboxylated into aminoacetone. Also acts on D-threonine, L-serine, D-serine, D-3-hydroxyisobutyrate, L-3-hydroxyisobutyrate, D-glycerate and L-glycerate. Able to catalyze the reduction of the malonic semialdehyde to 3-hydroxypropionic acid. YdfG is apparently supplementing RutE, the presumed malonic semialdehyde reductase involved in pyrimidine degradation since both are able to detoxify malonic semialdehyde. In Salmonella typhi, this protein is NADP-dependent 3-hydroxy acid dehydrogenase YdfG.